The sequence spans 456 residues: Adenylosuccinate synthetase isozyme 2 (456 aa).

The disordered stretch occupies residues methionine 1 to arginine 24. Residues glycine 39 to lysine 45 and glycine 67 to threonine 69 contribute to the GTP site. Residue aspartate 40 is the Proton acceptor of the active site. Positions 40 and 67 each coordinate Mg(2+). Substrate is bound at residue aspartate 40. IMP contacts are provided by residues aspartate 40–lysine 43, asparagine 65–histidine 68, threonine 162, arginine 176, asparagine 255, threonine 270, and arginine 334. Residue histidine 68 is the Proton donor of the active site. A substrate-binding site is contributed by valine 330–arginine 336. GTP is bound by residues arginine 336, lysine 362–aspartate 364, and glycine 444–lysine 447.

This sequence belongs to the adenylosuccinate synthetase family. Homodimer. Mg(2+) is required as a cofactor. Widely expressed.

The protein resides in the cytoplasm. The protein localises to the mitochondrion. It catalyses the reaction IMP + L-aspartate + GTP = N(6)-(1,2-dicarboxyethyl)-AMP + GDP + phosphate + 2 H(+). It participates in purine metabolism; AMP biosynthesis via de novo pathway; AMP from IMP: step 1/2. With respect to regulation, inhibited competitively by AMP and IMP and non-competitively by fructose 1,6-bisphosphate. Plays an important role in the de novo pathway and in the salvage pathway of purine nucleotide biosynthesis. Catalyzes the first committed step in the biosynthesis of AMP from IMP. The polypeptide is Adenylosuccinate synthetase isozyme 2 (Sus scrofa (Pig)).